Reading from the N-terminus, the 116-residue chain is Mercuric transport protein MerT (116 aa).

A run of 2 helical transmembrane segments spans residues 16–36 (LAAI…ALGF) and 46–66 (VLEP…FFAW). Positions 24 and 25 each coordinate Hg(2+). Positions 76 and 82 each coordinate Hg(2+). A helical transmembrane segment spans residues 94–114 (IFWVVAALVLVALGFPYVMPF).

Belongs to the MerT family.

It localises to the cell inner membrane. Involved in mercury resistance. Probably transfers a mercuric ion from the periplasmic Hg(2+)-binding protein MerP to the cytoplasmic mercuric reductase MerA. The chain is Mercuric transport protein MerT from Serratia marcescens.